A 351-amino-acid polypeptide reads, in one-letter code: D-alanine--D-alanine ligase (351 aa).

Positions 135 to 343 (NQIFLQSGQK…MEEVFADLIE (209 aa)) constitute an ATP-grasp domain. 167 to 222 (LMSLGFPQFLKPVEGGSSVSTYKITNQEQLSRQLALIFESDSKVMSQSFLAGTEVS) serves as a coordination point for ATP. Mg(2+)-binding residues include Asp298, Glu310, and Asn312.

This sequence belongs to the D-alanine--D-alanine ligase family. Requires Mg(2+) as cofactor. Mn(2+) is required as a cofactor.

It localises to the cytoplasm. The catalysed reaction is 2 D-alanine + ATP = D-alanyl-D-alanine + ADP + phosphate + H(+). The protein operates within cell wall biogenesis; peptidoglycan biosynthesis. Functionally, cell wall formation. The chain is D-alanine--D-alanine ligase from Leptospira borgpetersenii serovar Hardjo-bovis (strain JB197).